The following is a 350-amino-acid chain: Inactive ADP-ribosyltransferase arh2 (350 aa).

This sequence belongs to the ADP-ribosylglycohydrolase family.

Its subcellular location is the cytoplasm. It is found in the myofibril. The protein localises to the sarcomere. Required for myofibril assembly and outgrowth of the cardiac chambers in the developing heart. Appears to be catalytically inactive, showing no activity against O-acetyl-ADP-ribose. In Danio rerio (Zebrafish), this protein is Inactive ADP-ribosyltransferase arh2 (adprhl1).